The primary structure comprises 338 residues: MSDRLKPLIGTAATRPLTREEAEFAFECLFEGEATPAQMGGLLMALRTRGETVDEYAAAATVMRAKCHKVRAPHGAIDIVGTGGDGKGTLNISTATAFVVAGAGVPVAKHGNRNLSSKSGAADALTEMGLNVMIGPERVEECLMEAGIGFMMAPMHHPAMRHVGPVRAELGTRTIFNILGPLTNPAGVKRQLTGAFSPDLIRPMAEVLAALGSEKAWLVHGGDGTDELAISAASKVAALEGGQIREFDLHPEEAGLPVHPFEEIVGGTPAENAQAFRALLEGAPGAYRDAVLLNAAAALVVADRAPGLREGVEIATESILSGAAKAKVALLARLTNAA.

Residues G81, 84-85 (GD), T89, 91-94 (NIST), 109-117 (KHGNRNLSS), and A121 each bind 5-phospho-alpha-D-ribose 1-diphosphate. An anthranilate-binding site is contributed by G81. S93 contributes to the Mg(2+) binding site. N112 is an anthranilate binding site. Residue R167 participates in anthranilate binding. D226 and E227 together coordinate Mg(2+).

This sequence belongs to the anthranilate phosphoribosyltransferase family. Homodimer. Requires Mg(2+) as cofactor.

The catalysed reaction is N-(5-phospho-beta-D-ribosyl)anthranilate + diphosphate = 5-phospho-alpha-D-ribose 1-diphosphate + anthranilate. The protein operates within amino-acid biosynthesis; L-tryptophan biosynthesis; L-tryptophan from chorismate: step 2/5. Its function is as follows. Catalyzes the transfer of the phosphoribosyl group of 5-phosphorylribose-1-pyrophosphate (PRPP) to anthranilate to yield N-(5'-phosphoribosyl)-anthranilate (PRA). The sequence is that of Anthranilate phosphoribosyltransferase from Cereibacter sphaeroides (strain ATCC 17025 / ATH 2.4.3) (Rhodobacter sphaeroides).